The primary structure comprises 285 residues: ATP phosphoribosyltransferase (285 aa).

The protein belongs to the ATP phosphoribosyltransferase family. Long subfamily. Mg(2+) is required as a cofactor.

The protein localises to the cytoplasm. It catalyses the reaction 1-(5-phospho-beta-D-ribosyl)-ATP + diphosphate = 5-phospho-alpha-D-ribose 1-diphosphate + ATP. Its pathway is amino-acid biosynthesis; L-histidine biosynthesis; L-histidine from 5-phospho-alpha-D-ribose 1-diphosphate: step 1/9. Feedback inhibited by histidine. Catalyzes the condensation of ATP and 5-phosphoribose 1-diphosphate to form N'-(5'-phosphoribosyl)-ATP (PR-ATP). Has a crucial role in the pathway because the rate of histidine biosynthesis seems to be controlled primarily by regulation of HisG enzymatic activity. The sequence is that of ATP phosphoribosyltransferase from Sulfolobus acidocaldarius (strain ATCC 33909 / DSM 639 / JCM 8929 / NBRC 15157 / NCIMB 11770).